The primary structure comprises 872 residues: Chaperone protein ClpB 2 (872 aa).

The region spanning 6 to 148 is the Clp R domain; the sequence is PNKFTEKAWE…AEIIKQIRGT (143 aa). Repeat stretches follow at residues 9–73 and 85–148; these read FTEK…IAQQ and LGRS…IRGT. The tract at residues 161–342 is NBD1; the sequence is ESLEKYGRDL…RRFQEVLVDE (182 aa). 208–215 is an ATP binding site; it reads GEPGVGKT. Residues 343–551 form a linker region; that stretch reads PNVLDTISIL…IAEIISKWTG (209 aa). Residues 393-527 are a coiled coil; sequence IDLVDEAAAK…LETQLAEQQT (135 aa). An NBD2 region spans residues 561–772; it reads EKEKLLHLED…RVDETIIFHG (212 aa). ATP is bound at residue 611–618; it reads GPTGVGKT. Residues 773–872 are C-terminal; it reads LQKSELRSIV…TSLRGDLVIV (100 aa).

It belongs to the ClpA/ClpB family. As to quaternary structure, homohexamer. The oligomerization is ATP-dependent.

Its subcellular location is the cytoplasm. Its function is as follows. Part of a stress-induced multi-chaperone system, it is involved in the recovery of the cell from heat-induced damage, in cooperation with DnaK, DnaJ and GrpE. Acts before DnaK, in the processing of protein aggregates. Protein binding stimulates the ATPase activity; ATP hydrolysis unfolds the denatured protein aggregates, which probably helps expose new hydrophobic binding sites on the surface of ClpB-bound aggregates, contributing to the solubilization and refolding of denatured protein aggregates by DnaK. In Synechocystis sp. (strain ATCC 27184 / PCC 6803 / Kazusa), this protein is Chaperone protein ClpB 2 (clpB2).